The primary structure comprises 610 residues: MCGIVGAVAQRDVAEILVQGLRRLEYRGYDSAGVAVVDSDKQLTRLRRLGKVQELADAVEAAQVAGGTGIAHTRWATHGEPSEINAHPHISGDITVVHNGIIENHEMLRTMLQDRGYVFTSQTDTEVIAHLVEWELRSASSLLEAVQTTVKQLTGAYGTVVMDRNDPSRLVVARSGSPIVIGFGIGENFLASDQLALLNVTRRFMYLEEGDVAEMTRRDVRVFDALGQPVQREISESNLEHDAADKGHYRHYMQKEIFEQPKALINTMEGRITHDCVVVESIGVHAAEILAKVEHVQIVACGTSYNAGMTARYWFESLAGVSCDVEIASEFRYRKFVTRPNSLLITLSQSGETADTLAALRLAKEKGYMAAMTICNVAGSSLVRESDFAFMTRAGTEIGVASTKAFTTQLVTLLMLVTALGKQQQRIGRELEAEIVHALHQLPKQIETALSFEKQIETLAEDFADKHHTLFLGRGEYYPIAVEASLKLKEISYIHAEAYAAGELKHGPLALIDADMPVVVVAPSNELLEKLKSNIEEVRARGGLLYVFADEVAGFEADETMKIIAMPHVSEIVAPIYYTIPMQLLSYHVALIKGTDVDQPRNLAKAVTVE.

Cys2 acts as the Nucleophile; for GATase activity in catalysis. Residues 2–218 (CGIVGAVAQR…EGDVAEMTRR (217 aa)) enclose the Glutamine amidotransferase type-2 domain. 2 consecutive SIS domains span residues 286–426 (AAEI…QQQR) and 459–600 (LAED…VDQP). The active-site For Fru-6P isomerization activity is Lys605.

As to quaternary structure, homodimer.

The protein resides in the cytoplasm. The catalysed reaction is D-fructose 6-phosphate + L-glutamine = D-glucosamine 6-phosphate + L-glutamate. Functionally, catalyzes the first step in hexosamine metabolism, converting fructose-6P into glucosamine-6P using glutamine as a nitrogen source. In Vibrio cholerae serotype O1 (strain ATCC 39315 / El Tor Inaba N16961), this protein is Glutamine--fructose-6-phosphate aminotransferase [isomerizing].